The sequence spans 267 residues: 4-hydroxy-tetrahydrodipicolinate reductase (267 aa).

Residues 8–13 (GAAGRM) and glutamate 34 each bind NAD(+). Position 35 (arginine 35) interacts with NADP(+). Residues 98–100 (GST) and 122–125 (APNM) each bind NAD(+). Histidine 155 acts as the Proton donor/acceptor in catalysis. Histidine 156 contributes to the (S)-2,3,4,5-tetrahydrodipicolinate binding site. Lysine 159 acts as the Proton donor in catalysis. 165–166 (GT) is a binding site for (S)-2,3,4,5-tetrahydrodipicolinate.

The protein belongs to the DapB family.

Its subcellular location is the cytoplasm. The catalysed reaction is (S)-2,3,4,5-tetrahydrodipicolinate + NAD(+) + H2O = (2S,4S)-4-hydroxy-2,3,4,5-tetrahydrodipicolinate + NADH + H(+). It carries out the reaction (S)-2,3,4,5-tetrahydrodipicolinate + NADP(+) + H2O = (2S,4S)-4-hydroxy-2,3,4,5-tetrahydrodipicolinate + NADPH + H(+). It functions in the pathway amino-acid biosynthesis; L-lysine biosynthesis via DAP pathway; (S)-tetrahydrodipicolinate from L-aspartate: step 4/4. Functionally, catalyzes the conversion of 4-hydroxy-tetrahydrodipicolinate (HTPA) to tetrahydrodipicolinate. In Citrifermentans bemidjiense (strain ATCC BAA-1014 / DSM 16622 / JCM 12645 / Bem) (Geobacter bemidjiensis), this protein is 4-hydroxy-tetrahydrodipicolinate reductase.